We begin with the raw amino-acid sequence, 281 residues long: Nucleotide-binding protein Patl_0571 (281 aa).

Residue 8 to 15 (GRSGSGKS) coordinates ATP. 56-59 (DVRN) is a binding site for GTP.

Belongs to the RapZ-like family.

Its function is as follows. Displays ATPase and GTPase activities. The sequence is that of Nucleotide-binding protein Patl_0571 from Pseudoalteromonas atlantica (strain T6c / ATCC BAA-1087).